Reading from the N-terminus, the 414-residue chain is Sarcosine oxidase subunit beta (414 aa).

The FAD site is built by G42, H43, E64, N72, T77, and I79. The residue at position 183 (H183) is a Tele-8alpha-FMN histidine. V207, G364, G367, and K369 together coordinate FAD.

This sequence belongs to the SoxB family. In terms of assembly, heterotetramer composed of subunits alpha (SoxA), beta (SoxB), gamma (SoxG) and delta (SoxD). The cofactor is FAD. FMN is required as a cofactor.

It localises to the cytoplasm. It catalyses the reaction sarcosine + (6S)-5,6,7,8-tetrahydrofolate + O2 = (6R)-5,10-methylene-5,6,7,8-tetrahydrofolate + glycine + H2O2. The catalysed reaction is sarcosine + O2 + H2O = formaldehyde + glycine + H2O2. Functionally, in the presence of tetrahydrofolate, catalyzes the oxidative demethylation of sarcosine to yield glycine, 5,10-methylenetetrahydrofolate and hydrogen peroxide. In the absence of tetrahydrofolate, catalyzes the oxidative demethylation of sarcosine to yield glycine, formaldehyde and hydrogen peroxide. In Rhodobacter capsulatus (strain ATCC BAA-309 / NBRC 16581 / SB1003), this protein is Sarcosine oxidase subunit beta (soxB).